The following is a 484-amino-acid chain: Glutamate--tRNA ligase (484 aa).

The short motif at 11–21 (PSPTGYLHIGN) is the 'HIGH' region element. A 'KMSKS' region motif is present at residues 252-256 (KLSKR). Residue Lys255 coordinates ATP.

The protein belongs to the class-I aminoacyl-tRNA synthetase family. Glutamate--tRNA ligase type 1 subfamily. As to quaternary structure, monomer.

The protein resides in the cytoplasm. The enzyme catalyses tRNA(Glu) + L-glutamate + ATP = L-glutamyl-tRNA(Glu) + AMP + diphosphate. Functionally, catalyzes the attachment of glutamate to tRNA(Glu) in a two-step reaction: glutamate is first activated by ATP to form Glu-AMP and then transferred to the acceptor end of tRNA(Glu). This is Glutamate--tRNA ligase from Staphylococcus aureus (strain MRSA252).